The chain runs to 436 residues: GTPase Der (436 aa).

EngA-type G domains lie at 4 to 167 (PVVA…PKGG) and 176 to 351 (IKFC…DNHA). Residues 10–17 (GRPNVGKS), 57–61 (DTGGI), 119–122 (NKID), 182–189 (GRPNVGKS), 229–233 (DTAGM), and 294–297 (NKWD) contribute to the GTP site. The region spanning 352 to 436 (MRVQTNVLNE…PIKIIARPRK (85 aa)) is the KH-like domain.

The protein belongs to the TRAFAC class TrmE-Era-EngA-EngB-Septin-like GTPase superfamily. EngA (Der) GTPase family. As to quaternary structure, associates with the 50S ribosomal subunit.

Functionally, GTPase that plays an essential role in the late steps of ribosome biogenesis. The polypeptide is GTPase Der (Geobacillus kaustophilus (strain HTA426)).